Here is a 230-residue protein sequence, read N- to C-terminus: Ribonuclease HII (230 aa).

The region spanning 1–224 (MIIIGIDEAG…CKRILDKSKQ (224 aa)) is the RNase H type-2 domain. A divalent metal cation-binding residues include D7, E8, and D112.

It belongs to the RNase HII family. Mn(2+) serves as cofactor. The cofactor is Mg(2+).

It is found in the cytoplasm. It carries out the reaction Endonucleolytic cleavage to 5'-phosphomonoester.. In terms of biological role, endonuclease that specifically degrades the RNA of RNA-DNA hybrids. This is Ribonuclease HII (rnhB) from Methanocaldococcus jannaschii (strain ATCC 43067 / DSM 2661 / JAL-1 / JCM 10045 / NBRC 100440) (Methanococcus jannaschii).